Here is a 449-residue protein sequence, read N- to C-terminus: Uridine-cytidine kinase C (449 aa).

ATP is bound at residue 58–65 (GPSGAGKT). One can recognise a CYTH domain in the interval 235–401 (NPIYILKSVK…QKSYIELYQD (167 aa)).

It belongs to the uridine kinase family.

The catalysed reaction is uridine + ATP = UMP + ADP + H(+). The enzyme catalyses cytidine + ATP = CMP + ADP + H(+). It participates in pyrimidine metabolism; CTP biosynthesis via salvage pathway; CTP from cytidine: step 1/3. Its pathway is pyrimidine metabolism; UMP biosynthesis via salvage pathway; UMP from uridine: step 1/1. Functionally, catalyzes the conversion of uridine into uridine monophosphate and cytidine into cytidine monophosphate in the pyrimidine salvage pathway. The polypeptide is Uridine-cytidine kinase C (udkC) (Dictyostelium discoideum (Social amoeba)).